An 86-amino-acid polypeptide reads, in one-letter code: YcgL domain-containing protein IL1825 (86 aa).

The 85-residue stretch at 1-85 folds into the YcgL domain; the sequence is MLCDVYRSSK…KREELQVNVN (85 aa).

This chain is YcgL domain-containing protein IL1825, found in Idiomarina loihiensis (strain ATCC BAA-735 / DSM 15497 / L2-TR).